Here is a 345-residue protein sequence, read N- to C-terminus: Tetraacyldisaccharide 4'-kinase (345 aa).

Residue 51–58 (HVGGAGKT) participates in ATP binding.

The protein belongs to the LpxK family.

The enzyme catalyses a lipid A disaccharide + ATP = a lipid IVA + ADP + H(+). It participates in glycolipid biosynthesis; lipid IV(A) biosynthesis; lipid IV(A) from (3R)-3-hydroxytetradecanoyl-[acyl-carrier-protein] and UDP-N-acetyl-alpha-D-glucosamine: step 6/6. Its function is as follows. Transfers the gamma-phosphate of ATP to the 4'-position of a tetraacyldisaccharide 1-phosphate intermediate (termed DS-1-P) to form tetraacyldisaccharide 1,4'-bis-phosphate (lipid IVA). This Bradyrhizobium sp. (strain BTAi1 / ATCC BAA-1182) protein is Tetraacyldisaccharide 4'-kinase.